The following is a 327-amino-acid chain: MIFSILEHILTHISFSVVSIVLTIYFLTFLVNLDEIIGFFDSSDKGIIITFFGITGLLFTRWIYSGHFPLSNLYESLIFLAWAFSIIHMVSYFNKKKKKNLNAITAPSAIFIQGFAASGLLNMPQSAILVPALQSQWLMMHVSMMILGYGALLCGSLLSIALLVITFRKVGPTFLKKNLKKKFLLNELFSFDVLYYINEKNSILLQQNINFSFSRNYYRYQLIEQLDFLSFRIISLGFIFLTIGILSGAVWANETWGSYWNWDPKETWAFITWTIFAIYLHIKTNRNVKGINSAIVAAIGFLLIWICYFGVNLLGIGLHSYGSFTSS.

The next 8 membrane-spanning stretches (helical) occupy residues 13–33, 46–66, 73–93, 101–121, 145–165, 233–253, 262–282, and 294–314; these read ISFSVVSIVLTIYFLTFLVNL, GIIITFFGITGLLFTRWIYSG, LYESLIFLAWAFSIIHMVSYF, LNAITAPSAIFIQGFAASGLL, MILGYGALLCGSLLSIALLVI, IISLGFIFLTIGILSGAVWAN, WDPKETWAFITWTIFAIYLHI, and AIVAAIGFLLIWICYFGVNLL.

This sequence belongs to the CcmF/CycK/Ccl1/NrfE/CcsA family. As to quaternary structure, may interact with Ccs1.

Its subcellular location is the plastid. It is found in the chloroplast thylakoid membrane. Functionally, required during biogenesis of c-type cytochromes (cytochrome c6 and cytochrome f) at the step of heme attachment. In Lobularia maritima (Sweet alyssum), this protein is Cytochrome c biogenesis protein CcsA.